A 61-amino-acid polypeptide reads, in one-letter code: Bactridin-1 (61 aa).

Residues 1–61 (KDGYIIEHRG…KIFDSNNLKC (61 aa)) enclose the LCN-type CS-alpha/beta domain. Disulfide bonds link Cys-11-Cys-61, Cys-15-Cys-37, Cys-23-Cys-42, and Cys-27-Cys-44.

This sequence belongs to the long (4 C-C) scorpion toxin superfamily. Sodium channel inhibitor family. Beta subfamily. In terms of tissue distribution, expressed by the venom gland.

The protein localises to the secreted. Functionally, shows antibacterial activity against both Gram-positive bacteria (B.subtilis, M.luteus, E.faecalis) and Gram-negative bacteria (P.aeruginosa, Y.enterocolitica, A.calcoaceticus). Modifies membrane sodium permeability on Y.enterocolitica. Is toxic to cockroaches and crabs, but is not toxic to mice. Does not induce haemolysis in human erythrocytes. Acts by inhibiting the sodium (Nav) currents. This is Bactridin-1 from Tityus discrepans (Venezuelan scorpion).